Reading from the N-terminus, the 1304-residue chain is Myosin-1 (1304 aa).

The span at 1 to 12 shows a compositional bias: basic residues; the sequence is MAIVKRGVRTKN. The interval 1–24 is disordered; the sequence is MAIVKRGVRTKNKQSQQPSKSGIK. One can recognise a Myosin motor domain in the interval 36-730; it reads VGVSDLTLLS…TLFALEDMRD (695 aa). Residue 129 to 136 participates in ATP binding; the sequence is GESGAGKT. S364 carries the post-translational modification Phosphoserine. The tract at residues 413-496 is actin-binding; it reads SIGILDIYGF…PGLFAALNDS (84 aa). 2 IQ domains span residues 734–754 and 755–780; these read HNMAARIQRAWRRYIKRKDDA and ARLIQSAWKNKTHGNQFEQLRDYGNG. The TH1 domain occupies 788 to 978; sequence RRRMSMLGSR…TVTVRQGLPG (191 aa). Disordered stretches follow at residues 963–1162 and 1214–1304; these read DSYK…TYKA and ECDP…DDDW. Composition is skewed to polar residues over residues 964 to 983 and 1001 to 1012; these read SYKSGTVTVRQGLPGNSQNP and RGSNMRSTSSYQ. Composition is skewed to low complexity over residues 1029 to 1052, 1072 to 1096, and 1120 to 1140; these read QPPVQQTQQRVVPPVQSQPKPQAQ, QPHAHPEQAAQAAQAAFHHTAPQAQ, and PSAPSRPARKTAPAPPAKKNV. The segment covering 1141–1156 has biased composition (pro residues); sequence APPPPPAAASPPPKPK. The SH3 domain occupies 1155 to 1217; it reads PKFPTYKAAY…PAAYVVECDP (63 aa). Composition is skewed to low complexity over residues 1217–1227 and 1236–1256; these read PPANSPAGNAK and LNSASQAQQSQQQAQAPNGAG. The span at 1292-1304 shows a compositional bias: acidic residues; that stretch reads DSDEEDEEDDDDW.

Belongs to the TRAFAC class myosin-kinesin ATPase superfamily. Myosin family. In terms of processing, phosphorylation of the TEDS site (Ser-364) is required for the polarization of the actin cytoskeleton. Phosphorylation probably activates the myosin-I ATPase activity.

It is found in the cytoplasm. It localises to the cytoskeleton. The protein resides in the actin patch. Type-I myosin implicated in the organization of the actin cytoskeleton. Required for proper actin cytoskeleton polarization. At the cell cortex, assembles in patch-like structures together with proteins from the actin-polymerizing machinery and promotes actin assembly. Functions as actin nucleation-promoting factor (NPF) for the Arp2/3 complex. This is Myosin-1 (MYO1) from Debaryomyces hansenii (strain ATCC 36239 / CBS 767 / BCRC 21394 / JCM 1990 / NBRC 0083 / IGC 2968) (Yeast).